The primary structure comprises 288 residues: ATP phosphoribosyltransferase (288 aa).

This sequence belongs to the ATP phosphoribosyltransferase family. Long subfamily. The cofactor is Mg(2+).

Its subcellular location is the cytoplasm. The enzyme catalyses 1-(5-phospho-beta-D-ribosyl)-ATP + diphosphate = 5-phospho-alpha-D-ribose 1-diphosphate + ATP. The protein operates within amino-acid biosynthesis; L-histidine biosynthesis; L-histidine from 5-phospho-alpha-D-ribose 1-diphosphate: step 1/9. Its activity is regulated as follows. Feedback inhibited by histidine. Its function is as follows. Catalyzes the condensation of ATP and 5-phosphoribose 1-diphosphate to form N'-(5'-phosphoribosyl)-ATP (PR-ATP). Has a crucial role in the pathway because the rate of histidine biosynthesis seems to be controlled primarily by regulation of HisG enzymatic activity. The chain is ATP phosphoribosyltransferase from Methanococcus maripaludis (strain C5 / ATCC BAA-1333).